The following is an 830-amino-acid chain: Adhesion G protein-coupled receptor E2 (830 aa).

The N-terminal stretch at 1-22 is a signal peptide; the sequence is MRHGHPRLLPGLLMLLLLPLGA. The Extracellular portion of the chain corresponds to 23 to 540; sequence AAQKTSGCAR…MAHYDVQEED (518 aa). Positions 26–68 constitute an EGF-like 1 domain; it reads KTSGCARWCPPKSTCVNATTCRCSPGFSSLSGEIFSSPLESCD. 5 cysteine pairs are disulfide-bonded: Cys-30–Cys-40, Cys-34–Cys-46, Cys-48–Cys-67, Cys-73–Cys-87, and Cys-81–Cys-96. An N-linked (GlcNAc...) asparagine glycan is attached at Asn-42. Residues 69–108 form the EGF-like 1; calcium-binding domain; it reads DIDECGPPPLVSCGRLADCQNTEGSYHCMCSPGYALASGA. Asn-113 carries N-linked (GlcNAc...) asparagine glycosylation. Residues 121–159 form the EGF-like 2; calcium-binding domain; the sequence is DVDECQLKPRVCKSRGICTNTKGSYTCKCPPGFELNLGD. 6 disulfide bridges follow: Cys-125–Cys-138, Cys-132–Cys-147, Cys-169–Cys-182, Cys-176–Cys-191, Cys-218–Cys-231, and Cys-225–Cys-240. The 39-residue stretch at 165–203 folds into the EGF-like 3; calcium-binding domain; sequence DVNECTSGQNPCHNSTHCLNNIGGYECRCRPGWKPVPGS. N-linked (GlcNAc...) asparagine glycosylation occurs at Asn-178. An EGF-like 4; calcium-binding domain is found at 214 to 253; sequence DVDECSSGKHTCHYSTVCINTVGSYKCRCRRGWKPKPRFQ. N-linked (GlcNAc...) asparagine glycosylation is found at Asn-258, Asn-348, Asn-361, and Asn-379. One can recognise a GAIN-B domain in the interval 358-537; it reads WTFNASAGTD…AVLMAHYDVQ (180 aa). 2 cysteine pairs are disulfide-bonded: Cys-489-Cys-519 and Cys-507-Cys-521. The tract at residues 489-537 is GPS; the sequence is CVFWEHSQDECGHWSTRGCTVVDSGDTSTTCQCTHLSSFAVLMAHYDVQ. A helical transmembrane segment spans residues 541 to 561; sequence LVLPVITYVGLGLSLLCLLLA. At 562 to 576 the chain is on the cytoplasmic side; that stretch reads ALTFLLCKAIQNTST. Residues 577-597 traverse the membrane as a helical segment; that stretch reads SLHLQLLICLFLAHLLFLMAI. The Extracellular segment spans residues 598–603; sequence DRTEIK. Residues 604 to 624 traverse the membrane as a helical segment; it reads VLCSIIAGALHYLYLASFTWM. Residues 625–651 are Cytoplasmic-facing; sequence LLEGLHLFLTARNLMVVNYSSVSMLMK. The chain crosses the membrane as a helical span at residues 652 to 672; sequence KLMYPVGYGVPTLIVAISAAS. Over 673–690 the chain is Extracellular; sequence RSHLYGTRTRCWLNPEER. A helical membrane pass occupies residues 691-711; that stretch reads FIWSFLGPVCTIFSVNLGFFL. The Cytoplasmic portion of the chain corresponds to 712–744; sequence MTLWILKSKLSSLNSDVSTLQNTRMLTFKAIAQ. Residues 745-765 traverse the membrane as a helical segment; the sequence is LFILGCTWCLGILQVGPAAHV. The Extracellular portion of the chain corresponds to 766–767; sequence MA. Residues 768-788 form a helical membrane-spanning segment; it reads YLFTIINSLQGVFIFLVYCLL. Over 789–830 the chain is Cytoplasmic; that stretch reads SQQVREEYGKWFKGIRKTRAESEKYTLSSRAMSDVNKPMMVN.

The protein belongs to the G-protein coupled receptor 2 family. Adhesion G-protein coupled receptor (ADGR) subfamily. Forms a heterodimer, consisting of a large extracellular region non-covalently linked to a seven-transmembrane moiety. Interacts with chondroitin sulfate; the interaction with chondroitin sulfate is calcium-dependent. Interacts with CD55. In terms of processing, autoproteolytically cleaved into 2 subunits, an extracellular alpha subunit and a seven-transmembrane beta subunit.

It localises to the cell membrane. It is found in the cell projection. The protein localises to the ruffle membrane. Cell surface receptor that binds to the chondroitin sulfate moiety of glycosaminoglycan chains and promotes cell attachment. Promotes granulocyte chemotaxis, degranulation and adhesion. In macrophages, promotes the release of inflammatory cytokines, including IL8 and TNF. Signals probably through G-proteins. This chain is Adhesion G protein-coupled receptor E2 (ADGRE2), found in Canis lupus familiaris (Dog).